Reading from the N-terminus, the 600-residue chain is Elongation factor 4 (600 aa).

In terms of domain architecture, tr-type G spans 5–187 (KYIRNFSIIA…AIVNKLPPPK (183 aa)). GTP-binding positions include 17-22 (DHGKST) and 134-137 (NKLD).

It belongs to the TRAFAC class translation factor GTPase superfamily. Classic translation factor GTPase family. LepA subfamily.

The protein resides in the cell inner membrane. It carries out the reaction GTP + H2O = GDP + phosphate + H(+). Required for accurate and efficient protein synthesis under certain stress conditions. May act as a fidelity factor of the translation reaction, by catalyzing a one-codon backward translocation of tRNAs on improperly translocated ribosomes. Back-translocation proceeds from a post-translocation (POST) complex to a pre-translocation (PRE) complex, thus giving elongation factor G a second chance to translocate the tRNAs correctly. Binds to ribosomes in a GTP-dependent manner. This Rickettsia conorii (strain ATCC VR-613 / Malish 7) protein is Elongation factor 4.